A 255-amino-acid chain; its full sequence is Triosephosphate isomerase (255 aa).

N9–K11 contacts substrate. H95 acts as the Electrophile in catalysis. E167 (proton acceptor) is an active-site residue. Substrate-binding positions include G173, S212, and G233–G234.

The protein belongs to the triosephosphate isomerase family. As to quaternary structure, homodimer.

Its subcellular location is the cytoplasm. It catalyses the reaction D-glyceraldehyde 3-phosphate = dihydroxyacetone phosphate. It functions in the pathway carbohydrate biosynthesis; gluconeogenesis. It participates in carbohydrate degradation; glycolysis; D-glyceraldehyde 3-phosphate from glycerone phosphate: step 1/1. In terms of biological role, involved in the gluconeogenesis. Catalyzes stereospecifically the conversion of dihydroxyacetone phosphate (DHAP) to D-glyceraldehyde-3-phosphate (G3P). The sequence is that of Triosephosphate isomerase from Salmonella dublin (strain CT_02021853).